A 143-amino-acid polypeptide reads, in one-letter code: MALERTFSIIKPDAVAKNVIGAIYNRFESAGLRIVASKMIHMSKEQAEGFYAEHKERPFFGALVDFMTSGPVMVQVLEGENAVLANREIMGATNPADAASGTLRSDYAASIDENAVHGSDAPESAAREIAYFFSEEEICPRTR.

ATP is bound by residues K11, F59, R87, T93, R104, and N114. The active-site Pros-phosphohistidine intermediate is the H117.

Belongs to the NDK family. As to quaternary structure, homotetramer. Mg(2+) is required as a cofactor.

It localises to the cytoplasm. It carries out the reaction a 2'-deoxyribonucleoside 5'-diphosphate + ATP = a 2'-deoxyribonucleoside 5'-triphosphate + ADP. It catalyses the reaction a ribonucleoside 5'-diphosphate + ATP = a ribonucleoside 5'-triphosphate + ADP. Functionally, major role in the synthesis of nucleoside triphosphates other than ATP. The ATP gamma phosphate is transferred to the NDP beta phosphate via a ping-pong mechanism, using a phosphorylated active-site intermediate. The polypeptide is Nucleoside diphosphate kinase (Alteromonas mediterranea (strain DSM 17117 / CIP 110805 / LMG 28347 / Deep ecotype)).